We begin with the raw amino-acid sequence, 460 residues long: Photosystem II CP43 reaction center protein (460 aa).

At 1-35 the chain is on the cytoplasmic side; that stretch reads MVTLSNTSMVGGRDLPSTGFAWWSGNARLINLSGK. Residues 36–58 traverse the membrane as a helical segment; that stretch reads LLGAHVAHAGLIVFWAGAMTLFE. Residues 59–98 lie on the Lumenal, thylakoid side of the membrane; sequence VAHFIPEKPMYEQGLILLPHIATLGWGVGPAGEVTDIFPF. Residues 99-121 form a helical membrane-spanning segment; the sequence is FVVGVLHLISSAVLGLGGIYHAL. The Cytoplasmic portion of the chain corresponds to 122-142; sequence RGPEVLEEYSSFFGYDWKDKN. Residues 143-165 form a helical membrane-spanning segment; that stretch reads QMTNIIGYHLILLGCGALLLVFK. The Lumenal, thylakoid segment spans residues 166-220; it reads AMFFGGVYDTWAPGGGDVRVITNPTLNPAIIFGYLLKAPFGGEGWIISVNNMEDI. The chain crosses the membrane as a helical span at residues 221 to 240; sequence IGGHIWIGLICISGGIWHIL. At 241–255 the chain is on the cytoplasmic side; the sequence is TKPFGWARRALIWSG. Residues 256 to 276 traverse the membrane as a helical segment; sequence EAYLSYSLGALSLMGFIASVF. The Lumenal, thylakoid portion of the chain corresponds to 277–411; that stretch reads VWFNNTAYPS…NSFNYVSPRA (135 aa). Residues Glu-341 and Arg-344 each contribute to the [CaMn4O5] cluster site. The chain crosses the membrane as a helical span at residues 412-436; that stretch reads WLATSHFVLGFFFLVGHLWHAGRAR. Residues 437–460 are Cytoplasmic-facing; it reads AAAAGFEKGIDRETEPTLFMPDLD.

The protein belongs to the PsbB/PsbC family. PsbC subfamily. In terms of assembly, PSII is composed of 1 copy each of membrane proteins PsbA, PsbB, PsbC, PsbD, PsbE, PsbF, PsbH, PsbI, PsbJ, PsbK, PsbL, PsbM, PsbT, PsbX, PsbY, PsbZ, Psb30/Ycf12, peripheral proteins PsbO, CyanoQ (PsbQ), PsbU, PsbV and a large number of cofactors. It forms dimeric complexes. Requires Binds multiple chlorophylls and provides some of the ligands for the Ca-4Mn-5O cluster of the oxygen-evolving complex. It may also provide a ligand for a Cl- that is required for oxygen evolution. PSII binds additional chlorophylls, carotenoids and specific lipids. as cofactor.

It is found in the cellular thylakoid membrane. In terms of biological role, one of the components of the core complex of photosystem II (PSII). PSII binds chlorophyll and helps catalyze the primary light-induced photochemical processes of PSII. PSII is a light-driven water:plastoquinone oxidoreductase, using light energy to abstract electrons from H(2)O, generating O(2) and a proton gradient subsequently used for ATP formation. Required for correct assembly of PSII. The sequence is that of Photosystem II CP43 reaction center protein from Synechocystis sp. (strain ATCC 27184 / PCC 6803 / Kazusa).